We begin with the raw amino-acid sequence, 545 residues long: Chaperonin GroEL (545 aa).

Residues 29-32, Lys50, 86-90, Gly414, 477-479, and Asp493 each bind ATP; these read TMGP, DGTTT, and NAA.

It belongs to the chaperonin (HSP60) family. As to quaternary structure, forms a cylinder of 14 subunits composed of two heptameric rings stacked back-to-back. Interacts with the co-chaperonin GroES.

The protein resides in the cytoplasm. The enzyme catalyses ATP + H2O + a folded polypeptide = ADP + phosphate + an unfolded polypeptide.. Functionally, together with its co-chaperonin GroES, plays an essential role in assisting protein folding. The GroEL-GroES system forms a nano-cage that allows encapsulation of the non-native substrate proteins and provides a physical environment optimized to promote and accelerate protein folding. This chain is Chaperonin GroEL, found in Campylobacter fetus subsp. fetus (strain 82-40).